Here is an 84-residue protein sequence, read N- to C-terminus: U21-theraphotoxin-Cg1c (84 aa).

An N-terminal signal peptide occupies residues 1 to 21 (MKVSVLITLAVLGVMFLLTSA). A propeptide spanning residues 22–47 (EERGSDQMDSPAWLKSMERIFQSEER) is cleaved from the precursor. Disulfide bonds link cysteine 49/cysteine 63, cysteine 56/cysteine 68, and cysteine 62/cysteine 76.

This sequence belongs to the neurotoxin 10 (Hwtx-1) family. 05 (F4a) subfamily. Expressed by the venom gland.

It localises to the secreted. Probable ion channel inhibitor. The protein is U21-theraphotoxin-Cg1c of Chilobrachys guangxiensis (Chinese earth tiger tarantula).